A 130-amino-acid polypeptide reads, in one-letter code: MYADSGPDPLPDDQVCLVVEVFRMLADATRVQVLWSLADREMSVNELAEQVGKPAPSVSQHLAKLRMARLVRTRRDGTTIFYRLENEHVRQLVIDAVFNAEHAGPGIPRHHRAAGGLQSVAKASATKDVG.

Positions 10 to 104 (LPDDQVCLVV…DAVFNAEHAG (95 aa)) constitute an HTH arsR-type domain. A DNA-binding region (H-T-H motif) is located at residues 44–67 (VNELAEQVGKPAPSVSQHLAKLRM). A disordered region spans residues 110–130 (HHRAAGGLQSVAKASATKDVG).

Binding to DNA is inhibited by nickel and cobalt ions. Functionally, represses expression of Rv2025c and its own expression. Acts by binding to the promoter regions. The polypeptide is HTH-type transcriptional regulator KmtR (kmtR) (Mycobacterium tuberculosis (strain ATCC 25618 / H37Rv)).